Here is a 225-residue protein sequence, read N- to C-terminus: J-type co-chaperone jac1, mitochondrial (225 aa).

The N-terminal 49 residues, 1 to 49 (MLKQAGNQSFRPFISFAQKSLFNRQITGNHWIFARFKFYPLNKIVNYNH), are a transit peptide targeting the mitochondrion. Positions 61–137 (NFYKQFEGDI…LTRAEYILQL (77 aa)) constitute a J domain. An HSP70 binding motif is present at residues 98-100 (HPD).

The protein belongs to the HscB family. In terms of assembly, interacts with ssc1.

The protein localises to the mitochondrion matrix. Co-chaperone required for the assembly of iron-sulfur (Fe/S) clusters in mitochondria. Stimulates the ATPase activity of the mitochondrial Hsp70 chaperone ssc1, to mediate the transfer of iron-sulfur clusters from isu1 to grx5. This is J-type co-chaperone jac1, mitochondrial from Schizosaccharomyces pombe (strain 972 / ATCC 24843) (Fission yeast).